Here is a 244-residue protein sequence, read N- to C-terminus: Small ribosomal subunit protein uS2 (244 aa).

It belongs to the universal ribosomal protein uS2 family.

The polypeptide is Small ribosomal subunit protein uS2 (Exiguobacterium sibiricum (strain DSM 17290 / CCUG 55495 / CIP 109462 / JCM 13490 / 255-15)).